Reading from the N-terminus, the 326-residue chain is Transcription factor bHLH143 (326 aa).

The span at 175 to 189 (SDDDDNDDWESDDEV) shows a compositional bias: acidic residues. 2 disordered regions span residues 175 to 194 (SDDDDNDDWESDDEVMSTGH) and 234 to 275 (RDSS…EQSR). Over residues 255 to 271 (PESNISSKQETGSGLSD) the composition is skewed to polar residues. The 50-residue stretch at 263-312 (QETGSGLSDEQSRKDKIHTALRILESVVPGAKGKEALLLLDEAIDYLKLL) folds into the bHLH domain.

As to quaternary structure, homodimer.

Its subcellular location is the nucleus. This is Transcription factor bHLH143 (BHLH143) from Arabidopsis thaliana (Mouse-ear cress).